The chain runs to 577 residues: Urease subunit alpha (577 aa).

The region spanning 136-577 (GGIDCHVHFI…LPMAQRYFLF (442 aa)) is the Urease domain. 3 residues coordinate Ni(2+): histidine 141, histidine 143, and lysine 224. Lysine 224 is subject to N6-carboxylysine. Residue histidine 226 participates in substrate binding. Ni(2+) is bound by residues histidine 253 and histidine 279. The active-site Proton donor is the histidine 327. Aspartate 367 lines the Ni(2+) pocket.

Belongs to the metallo-dependent hydrolases superfamily. Urease alpha subunit family. As to quaternary structure, heterotrimer of UreA (gamma), UreB (beta) and UreC (alpha) subunits. Three heterotrimers associate to form the active enzyme. Ni cation serves as cofactor. In terms of processing, carboxylation allows a single lysine to coordinate two nickel ions.

The protein resides in the cytoplasm. The enzyme catalyses urea + 2 H2O + H(+) = hydrogencarbonate + 2 NH4(+). Its pathway is nitrogen metabolism; urea degradation; CO(2) and NH(3) from urea (urease route): step 1/1. This Mycobacteroides abscessus (strain ATCC 19977 / DSM 44196 / CCUG 20993 / CIP 104536 / JCM 13569 / NCTC 13031 / TMC 1543 / L948) (Mycobacterium abscessus) protein is Urease subunit alpha.